A 135-amino-acid polypeptide reads, in one-letter code: MDERILEFIKNEQLLSWAMIDEKGVYTASAFYAFDEKNLAFIIASHEDTKHIRLASENSSIALNIAKESKIAFLKGVQAKAEFKMASKEQMKIYFSKFPFAKFDKSAKIYALELFWLKFTNNALGLSKKLEFYKK.

It belongs to the UPF0306 family.

In Campylobacter jejuni subsp. jejuni serotype O:6 (strain 81116 / NCTC 11828), this protein is UPF0306 protein C8J_1355.